A 255-amino-acid polypeptide reads, in one-letter code: 28.1 kDa virulence protein (255 aa).

Belongs to the SpvA family.

Not known. This protein is involved in the virulence of salmonellas. This Salmonella typhimurium protein is 28.1 kDa virulence protein (mkaB).